Consider the following 177-residue polypeptide: Secretion monitor (177 aa).

The first 30 residues, Met1 to Gly30, serve as a signal peptide directing secretion.

It belongs to the SecM family.

The protein localises to the cytoplasm. It is found in the cytosol. Its subcellular location is the periplasm. Regulates secA expression by translational coupling of the secM secA operon. Translational pausing at a specific Pro residue 5 residues before the end of the protein may allow disruption of a mRNA repressor helix that normally suppresses secA translation initiation. The chain is Secretion monitor from Yersinia enterocolitica serotype O:8 / biotype 1B (strain NCTC 13174 / 8081).